The primary structure comprises 145 residues: Large ribosomal subunit protein cL37 (145 aa).

Residues methionine 1–serine 63 constitute a chloroplast transit peptide. Residues lysine 125–valine 145 are disordered.

Belongs to the chloroplast-specific ribosomal protein cL37 family. As to quaternary structure, part of the 50S ribosomal subunit.

It is found in the plastid. The protein localises to the chloroplast. The polypeptide is Large ribosomal subunit protein cL37 (PSRP5) (Pisum sativum (Garden pea)).